Here is a 474-residue protein sequence, read N- to C-terminus: Glutathione synthetase (474 aa).

Alanine 2 carries the post-translational modification N-acetylalanine. Arginine 125 is a binding site for substrate. Residue glutamate 144 coordinates ATP. Residues glutamate 144 and asparagine 146 each coordinate Mg(2+). Substrate is bound by residues 148–151 (ISAS), 214–216 (ERN), glutamine 220, and 267–270 (RDGY). ATP contacts are provided by residues lysine 305, 364–373 (KPQREGGGNN), tyrosine 375, and 398–401 (MEKI). Mg(2+) is bound at residue glutamate 368. Serine 415 is subject to Phosphoserine. Glutamate 425 is a binding site for ATP. Arginine 450 lines the substrate pocket. 2 residues coordinate ATP: lysine 452 and aspartate 458. Residue 461 to 462 (VA) coordinates substrate.

It belongs to the eukaryotic GSH synthase family. In terms of assembly, homodimer. The cofactor is Mg(2+).

The catalysed reaction is gamma-L-glutamyl-L-cysteine + glycine + ATP = glutathione + ADP + phosphate + H(+). It catalyses the reaction gamma-L-glutamyl-(2S)-2-aminobutanoate + glycine + ATP = ophthalmate + ADP + phosphate + H(+). Its pathway is sulfur metabolism; glutathione biosynthesis; glutathione from L-cysteine and L-glutamate: step 2/2. Functionally, catalyzes the production of glutathione from gamma-glutamylcysteine and glycine in an ATP-dependent manner. Glutathione (gamma-glutamylcysteinylglycine, GSH) is the most abundant intracellular thiol in living aerobic cells and is required for numerous processes including the protection of cells against oxidative damage, amino acid transport, the detoxification of foreign compounds, the maintenance of protein sulfhydryl groups in a reduced state and acts as a cofactor for a number of enzymes. Participates in ophthalmate biosynthesis in hepatocytes. The sequence is that of Glutathione synthetase from Homo sapiens (Human).